A 380-amino-acid chain; its full sequence is O-methyltransferase ucdC (380 aa).

Residues 222–223 (GG), D247, and R283 each bind S-adenosyl-L-methionine. The active-site Proton acceptor is H287.

The protein belongs to the class I-like SAM-binding methyltransferase superfamily. Cation-independent O-methyltransferase family. COMT subfamily.

It participates in secondary metabolite biosynthesis. Functionally, nonribosomal peptide synthetase that mediates the biosynthesis of usterphenyllins and uscandidusins, p-terphenyl derivatives. Within the pathway, ucdC catalyzes O-methylation of the terphenyl triol intermediate produced by ucdB to yield terphenyllin carrying two methoxy moieties at C-9 and C-12. The pathway begin with the biosynthesis of 4-hydroxyphenylpyruvate (HPPA) from L-tyrosine, possibly by the aminotransferase ucdG. The nonribosomal peptide synthetase ucdA then condenses two HPPA units to produce atromentin. The key step in this pathway is the reduction and dehydration of atromentin to form a terphenyl triol intermediate, performed by the NAD-dependent dehydrogenase ucdB. Further O-methylation by the methyltransferase ucdC forms terphenyllin carrying two methoxy moieties at C-9 and C-12, and subsequent dihydroxylation at C-3 of ring A and C-15 of ring C by the flavin-dependent oxygenase ucdD leads to 3,15-dihydroxyterphenyllin. Prenylation by ucdE at position C-5 of ring A forms usterphenyllin B, and is followed by a second prenylation at position C-14 of ring C to form usterphenyllin A. The following furan ring formation that leads to uscandidusins A and B was proven to be an unexpected spontaneous non-enzymatic reaction. The polypeptide is O-methyltransferase ucdC (Aspergillus ustus).